The sequence spans 62 residues: Small ribosomal subunit protein eS27 (62 aa).

Residues Cys-17, Cys-20, Cys-36, and Cys-39 each contribute to the Zn(2+) site. The segment at 17–39 (CNDCENEQIIFGSASRKITCVVC) adopts a C4-type zinc-finger fold.

Belongs to the eukaryotic ribosomal protein eS27 family. As to quaternary structure, part of the 30S ribosomal subunit. Zn(2+) is required as a cofactor.

This is Small ribosomal subunit protein eS27 from Methanosarcina mazei (strain ATCC BAA-159 / DSM 3647 / Goe1 / Go1 / JCM 11833 / OCM 88) (Methanosarcina frisia).